Reading from the N-terminus, the 68-residue chain is UPF0253 protein AHA_2115 (68 aa).

It belongs to the UPF0253 family.

The polypeptide is UPF0253 protein AHA_2115 (Aeromonas hydrophila subsp. hydrophila (strain ATCC 7966 / DSM 30187 / BCRC 13018 / CCUG 14551 / JCM 1027 / KCTC 2358 / NCIMB 9240 / NCTC 8049)).